Here is a 284-residue protein sequence, read N- to C-terminus: Pantothenate synthetase (284 aa).

Residue methionine 34–histidine 41 coordinates ATP. Histidine 41 (proton donor) is an active-site residue. Residue glutamine 65 participates in (R)-pantoate binding. Glutamine 65 contributes to the beta-alanine binding site. Glycine 151–aspartate 154 lines the ATP pocket. Glutamine 157 contacts (R)-pantoate. ATP is bound by residues leucine 180 and methionine 188 to arginine 191.

The protein belongs to the pantothenate synthetase family. Homodimer.

The protein resides in the cytoplasm. The catalysed reaction is (R)-pantoate + beta-alanine + ATP = (R)-pantothenate + AMP + diphosphate + H(+). Its pathway is cofactor biosynthesis; (R)-pantothenate biosynthesis; (R)-pantothenate from (R)-pantoate and beta-alanine: step 1/1. In terms of biological role, catalyzes the condensation of pantoate with beta-alanine in an ATP-dependent reaction via a pantoyl-adenylate intermediate. The chain is Pantothenate synthetase from Paramagnetospirillum magneticum (strain ATCC 700264 / AMB-1) (Magnetospirillum magneticum).